A 345-amino-acid chain; its full sequence is Phosphate acyltransferase (345 aa).

This sequence belongs to the PlsX family. As to quaternary structure, homodimer. Probably interacts with PlsY.

It is found in the cytoplasm. It carries out the reaction a fatty acyl-[ACP] + phosphate = an acyl phosphate + holo-[ACP]. Its pathway is lipid metabolism; phospholipid metabolism. In terms of biological role, catalyzes the reversible formation of acyl-phosphate (acyl-PO(4)) from acyl-[acyl-carrier-protein] (acyl-ACP). This enzyme utilizes acyl-ACP as fatty acyl donor, but not acyl-CoA. The polypeptide is Phosphate acyltransferase (Photorhabdus laumondii subsp. laumondii (strain DSM 15139 / CIP 105565 / TT01) (Photorhabdus luminescens subsp. laumondii)).